The following is a 723-amino-acid chain: Polyribonucleotide nucleotidyltransferase (723 aa).

The Mg(2+) site is built by aspartate 488 and aspartate 494. The KH domain occupies 555–614; the sequence is PKIITLNIKPEKIKDVIGPGGKQINAIIEETGVKIDIEQDGTVYIASQDQAMNRKAIAII. In terms of domain architecture, S1 motif spans 624–692; sequence GEVYTGKVRR…HQGRVNLSRK (69 aa). Positions 692–723 are disordered; it reads KALLEKKEQPEGDKKPQAEKKFYPKTKKPESK. Residues 693 to 723 show a composition bias toward basic and acidic residues; it reads ALLEKKEQPEGDKKPQAEKKFYPKTKKPESK.

It belongs to the polyribonucleotide nucleotidyltransferase family. Mg(2+) serves as cofactor.

It localises to the cytoplasm. The enzyme catalyses RNA(n+1) + phosphate = RNA(n) + a ribonucleoside 5'-diphosphate. In terms of biological role, involved in mRNA degradation. Catalyzes the phosphorolysis of single-stranded polyribonucleotides processively in the 3'- to 5'-direction. This Listeria innocua serovar 6a (strain ATCC BAA-680 / CLIP 11262) protein is Polyribonucleotide nucleotidyltransferase.